A 297-amino-acid polypeptide reads, in one-letter code: UDP-N-acetylenolpyruvoylglucosamine reductase (297 aa).

An FAD-binding PCMH-type domain is found at 22 to 195 (RAGGTARYYA…LAGRFRLQRG (174 aa)). The active site involves arginine 169. Serine 223 acts as the Proton donor in catalysis. Residue glutamate 293 is part of the active site.

The protein belongs to the MurB family. FAD is required as a cofactor.

The protein resides in the cytoplasm. The catalysed reaction is UDP-N-acetyl-alpha-D-muramate + NADP(+) = UDP-N-acetyl-3-O-(1-carboxyvinyl)-alpha-D-glucosamine + NADPH + H(+). Its pathway is cell wall biogenesis; peptidoglycan biosynthesis. In terms of biological role, cell wall formation. In Chloroflexus aurantiacus (strain ATCC 29364 / DSM 637 / Y-400-fl), this protein is UDP-N-acetylenolpyruvoylglucosamine reductase.